The chain runs to 326 residues: tRNA-dihydrouridine(20a/20b) synthase [NAD(P)+] (326 aa).

Residues 26 to 28 (PMV) and Gln-79 each bind FMN. The active-site Proton donor is Cys-108. FMN-binding positions include Lys-149, His-177, 208-210 (NGD), and 232-233 (AR).

The protein belongs to the Dus family. Dus4 subfamily. FMN is required as a cofactor.

It is found in the mitochondrion. The catalysed reaction is 5,6-dihydrouridine(20a) in tRNA + NADP(+) = uridine(20a) in tRNA + NADPH + H(+). The enzyme catalyses 5,6-dihydrouridine(20a) in tRNA + NAD(+) = uridine(20a) in tRNA + NADH + H(+). It catalyses the reaction 5,6-dihydrouridine(20b) in tRNA + NAD(+) = uridine(20b) in tRNA + NADH + H(+). It carries out the reaction 5,6-dihydrouridine(20b) in tRNA + NADP(+) = uridine(20b) in tRNA + NADPH + H(+). The catalysed reaction is a 5,6-dihydrouridine in mRNA + NAD(+) = a uridine in mRNA + NADH + H(+). The enzyme catalyses a 5,6-dihydrouridine in mRNA + NADP(+) = a uridine in mRNA + NADPH + H(+). Its function is as follows. Catalyzes the synthesis of dihydrouridine, a modified base found in the D-loop of most tRNAs. Also able to mediate dihydrouridylation of some mRNAs, thereby affecting their translation. The sequence is that of tRNA-dihydrouridine(20a/20b) synthase [NAD(P)+] from Schizosaccharomyces pombe (strain 972 / ATCC 24843) (Fission yeast).